The primary structure comprises 198 residues: Large ribosomal subunit protein bL25 (198 aa).

The protein belongs to the bacterial ribosomal protein bL25 family. CTC subfamily. As to quaternary structure, part of the 50S ribosomal subunit; part of the 5S rRNA/L5/L18/L25 subcomplex. Contacts the 5S rRNA. Binds to the 5S rRNA independently of L5 and L18.

Its function is as follows. This is one of the proteins that binds to the 5S RNA in the ribosome where it forms part of the central protuberance. The protein is Large ribosomal subunit protein bL25 of Streptomyces coelicolor (strain ATCC BAA-471 / A3(2) / M145).